A 144-amino-acid polypeptide reads, in one-letter code: Large ribosomal subunit protein uL11 (144 aa).

Belongs to the universal ribosomal protein uL11 family. Part of the ribosomal stalk of the 50S ribosomal subunit. Interacts with L10 and the large rRNA to form the base of the stalk. L10 forms an elongated spine to which L12 dimers bind in a sequential fashion forming a multimeric L10(L12)X complex. Post-translationally, one or more lysine residues are methylated.

Functionally, forms part of the ribosomal stalk which helps the ribosome interact with GTP-bound translation factors. This Deinococcus deserti (strain DSM 17065 / CIP 109153 / LMG 22923 / VCD115) protein is Large ribosomal subunit protein uL11.